The following is a 177-amino-acid chain: Glia associated membrane protein glam-1 (177 aa).

The next 3 membrane-spanning stretches (helical) occupy residues Pro-19–Ser-39, Phe-42–Ala-62, and Val-76–Ala-96.

It localises to the membrane. The protein is Glia associated membrane protein glam-1 of Caenorhabditis elegans.